A 303-amino-acid chain; its full sequence is ATP synthase gamma chain (303 aa).

The protein belongs to the ATPase gamma chain family. F-type ATPases have 2 components, CF(1) - the catalytic core - and CF(0) - the membrane proton channel. CF(1) has five subunits: alpha(3), beta(3), gamma(1), delta(1), epsilon(1). CF(0) has three main subunits: a, b and c.

The protein resides in the cell inner membrane. In terms of biological role, produces ATP from ADP in the presence of a proton gradient across the membrane. The gamma chain is believed to be important in regulating ATPase activity and the flow of protons through the CF(0) complex. This chain is ATP synthase gamma chain, found in Bartonella henselae (strain ATCC 49882 / DSM 28221 / CCUG 30454 / Houston 1) (Rochalimaea henselae).